We begin with the raw amino-acid sequence, 212 residues long: Disintegrin-like halysetin (212 aa).

Residues 4-90 (PPVCGNELLE…ECPADVFHKN (87 aa)) enclose the Disintegrin domain. 9 disulfide bridges follow: Cys-7–Cys-26, Cys-18–Cys-36, Cys-62–Cys-82, Cys-69–Cys-94, Cys-101–Cys-106, Cys-113–Cys-128, Cys-151–Cys-158, Cys-163–Cys-174, and Cys-200–Cys-205. A D/ECD-tripeptide motif is present at residues 68 to 70 (ECD).

This sequence belongs to the venom metalloproteinase (M12B) family. P-III subfamily. P-IIIb sub-subfamily. In terms of assembly, monomer. Expressed by the venom gland.

It localises to the secreted. Inhibits human platelet aggregation stimulated by collagen with an IC(50) of 420 nM. The protein is Disintegrin-like halysetin of Gloydius halys (Chinese water mocassin).